The following is a 381-amino-acid chain: tRNA (guanine(26)-N(2))-dimethyltransferase (381 aa).

In terms of domain architecture, Trm1 methyltransferase spans Phe6–Met378. S-adenosyl-L-methionine is bound by residues Arg38, Arg63, Asp80, Asp122, and Ala123.

The protein belongs to the class I-like SAM-binding methyltransferase superfamily. Trm1 family. In terms of assembly, monomer.

It carries out the reaction guanosine(26) in tRNA + 2 S-adenosyl-L-methionine = N(2)-dimethylguanosine(26) in tRNA + 2 S-adenosyl-L-homocysteine + 2 H(+). Its function is as follows. Dimethylates a single guanine residue at position 26 of a number of tRNAs using S-adenosyl-L-methionine as donor of the methyl groups. In Pyrococcus furiosus (strain ATCC 43587 / DSM 3638 / JCM 8422 / Vc1), this protein is tRNA (guanine(26)-N(2))-dimethyltransferase.